Reading from the N-terminus, the 350-residue chain is Galactokinase (350 aa).

A substrate-binding site is contributed by Glu-14–Asp-17. ATP contacts are provided by residues Ser-46 and Gly-96 to Ser-102. 2 residues coordinate Mg(2+): Ser-102 and Glu-134. Asp-146 acts as the Proton acceptor in catalysis. Tyr-196 is a substrate binding site.

The protein belongs to the GHMP kinase family. GalK subfamily.

The protein resides in the cytoplasm. The catalysed reaction is alpha-D-galactose + ATP = alpha-D-galactose 1-phosphate + ADP + H(+). It participates in carbohydrate metabolism; galactose metabolism. In terms of biological role, catalyzes the transfer of the gamma-phosphate of ATP to D-galactose to form alpha-D-galactose-1-phosphate (Gal-1-P). In Thermotoga neapolitana, this protein is Galactokinase.